A 110-amino-acid polypeptide reads, in one-letter code: Large ribosomal subunit protein eL34 (110 aa).

Residues Met1–His41 are disordered. The segment covering Val30 to His41 has biased composition (basic residues).

It belongs to the eukaryotic ribosomal protein eL34 family.

This Encephalitozoon cuniculi (strain GB-M1) (Microsporidian parasite) protein is Large ribosomal subunit protein eL34 (RPL34).